The chain runs to 92 residues: Small ribosomal subunit protein bS18c (92 aa).

This sequence belongs to the bacterial ribosomal protein bS18 family. In terms of assembly, part of the 30S ribosomal subunit.

Its subcellular location is the plastid. The chain is Small ribosomal subunit protein bS18c (rps18) from Epifagus virginiana (Beechdrops).